The primary structure comprises 272 residues: Cell division protein DivIB (272 aa).

The Cytoplasmic portion of the chain corresponds to 1 to 21 (MRLSSHGKKTVSTSNNPVFNR). A helical transmembrane segment spans residues 22–42 (IGLFFTAAILFALFLQMLFFL). The POTRA domain maps to 43 to 115 (RPWQDIKETK…GTAIIRVNEN (73 aa)). At 43-272 (RPWQDIKETK…SSSKSSNSSK (230 aa)) the chain is on the extracellular side. Residues 253 to 272 (LSSLSSDKSKSSSKSSNSSK) are disordered.

It belongs to the FtsQ/DivIB family. DivIB subfamily.

Its subcellular location is the cell membrane. In terms of biological role, cell division protein that may be involved in stabilizing or promoting the assembly of the division complex. The protein is Cell division protein DivIB of Oenococcus oeni (strain ATCC BAA-331 / PSU-1).